The chain runs to 197 residues: Protein lin-7 homolog C (197 aa).

Position 2 is an N-acetylalanine (Ala-2). The Kinase interacting site signature appears at Ala-2 to Asp-13. The 56-residue stretch at Leu-10–Ser-65 folds into the L27 domain. The PDZ domain maps to Val-93 to Pro-175.

Belongs to the lin-7 family. As to quaternary structure, forms a complex with CASK and APBA1 or CASKIN1. Component of the brain-specific heterotrimeric complex (LIN-10-LIN-2-LIN-7 complex) composed of at least APBA1, CASK, and LIN7, which associates with the motor protein KIF17 to transport vesicles along microtubules. Can also interact with other modular proteins containing protein-protein interaction domains like PALS1, PALS2, MPP7, DLG1, DLG2 and DLG3 through its L27 domain. Interacts with DLG4 and GRIN2B as well as CDH1 and CTNNB1, the channels KCNJ12/Kir2.2, KCNJ4/Kir2.3 and probably KCNJ2/Kir2.1 and SLC6A12/BGT-1 via its PDZ domain. The association of LIN7A with cadherin and beta-catenin is calcium-dependent, occurs at synaptic junctions and requires the actin cytoskeleton. Interacts with EGFR, ERBB2, ERBB3 and ERBB4 with both PDZ and KID domains. Associates with KIF17 via APBA1. Interacts with HTR4. Forms a tripartite complex composed of DLG1, MPP7 and LIN7 (LIN7A or LIN7C). Interacts with MAPK12.

It localises to the cell membrane. Its subcellular location is the basolateral cell membrane. The protein localises to the cell junction. The protein resides in the postsynaptic density membrane. It is found in the tight junction. It localises to the synapse. Its subcellular location is the synaptosome. In terms of biological role, plays a role in establishing and maintaining the asymmetric distribution of channels and receptors at the plasma membrane of polarized cells. Forms membrane-associated multiprotein complexes that may regulate delivery and recycling of proteins to the correct membrane domains. The tripartite complex composed of LIN7 (LIN7A, LIN7B or LIN7C), CASK and APBA1 associates with the motor protein KIF17 to transport vesicles containing N-methyl-D-aspartate (NMDA) receptor subunit NR2B along microtubules. This complex may have the potential to couple synaptic vesicle exocytosis to cell adhesion in brain. Ensures the proper localization of GRIN2B (subunit 2B of the NMDA receptor) to neuronal postsynaptic density and may function in localizing synaptic vesicles at synapses where it is recruited by beta-catenin and cadherin. Required to localize Kir2 channels, GABA transporter (SLC6A12) and EGFR/ERBB1, ERBB2, ERBB3 and ERBB4 to the basolateral membrane of epithelial cells. The polypeptide is Protein lin-7 homolog C (LIN7C) (Bos taurus (Bovine)).